A 506-amino-acid polypeptide reads, in one-letter code: Aminoaldehyde dehydrogenase 1b (506 aa).

A Na(+)-binding site is contributed by D102. Residues 162–164 (TPW) and 188–191 (KPSE) contribute to the NAD(+) site. L192 lines the Na(+) pocket. Residues 242–245 (SFET) and E263 each bind NAD(+). Residue E263 is the Proton acceptor of the active site. The active-site Nucleophile is C297. The NAD(+) site is built by E396 and W462.

The protein belongs to the aldehyde dehydrogenase family.

The enzyme catalyses 4-aminobutanal + NAD(+) + H2O = 4-aminobutanoate + NADH + 2 H(+). It catalyses the reaction 3-aminopropanal + NAD(+) + H2O = beta-alanine + NADH + 2 H(+). The catalysed reaction is 4-(trimethylamino)butanal + NAD(+) + H2O = 4-(trimethylamino)butanoate + NADH + 2 H(+). It carries out the reaction 4-guanidinobutanal + NAD(+) + H2O = 4-guanidinobutanoate + NADH + 2 H(+). The enzyme catalyses betaine aldehyde + NAD(+) + H2O = glycine betaine + NADH + 2 H(+). The protein operates within amine and polyamine biosynthesis; betaine biosynthesis via choline pathway; betaine from betaine aldehyde: step 1/1. Dehydrogenase that catalyzes the oxidation of several aminoaldehydes. Metabolizes and detoxifies aldehyde products of polyamine degradation to non-toxic amino acids. Catalyzes the oxidation of 4-aminobutanal and 3-aminopropanal to 4-aminobutanoate and beta-alanine, respectively. Catalyzes the oxidation of 4-(trimethylamino)butanal and 4-guanidinobutanal to 4-trimethylammoniobutanoate and 4-guanidinobutanoate, respectively. Catalyzes the oxidation of betaine aldehyde to glycine betaine. This Zea mays (Maize) protein is Aminoaldehyde dehydrogenase 1b.